Consider the following 373-residue polypeptide: Carnosine N-methyltransferase (373 aa).

Residues Gln110, Arg113, Gly154, Glu175, Asp242, Phe243, and Cys262 each contribute to the S-adenosyl-L-methionine site. Asp266 serves as a coordination point for carnosine. Tyr274 serves as a coordination point for S-adenosyl-L-methionine. Carnosine is bound by residues His297 and Tyr356.

The protein belongs to the carnosine N-methyltransferase family.

It localises to the cytoplasm. The protein localises to the nucleus. The enzyme catalyses carnosine + S-adenosyl-L-methionine = anserine + S-adenosyl-L-homocysteine + H(+). In terms of biological role, N-methyltransferase that mediates the formation of anserine (beta-alanyl-N(Pi)-methyl-L-histidine) from carnosine. Also methylates other L-histidine-containing di- and tripeptides such as Gly-Gly-His, Gly-His and homocarnosine (GABA-His). This is Carnosine N-methyltransferase from Schizosaccharomyces pombe (strain 972 / ATCC 24843) (Fission yeast).